The primary structure comprises 524 residues: 2-isopropylmalate synthase (524 aa).

The Pyruvate carboxyltransferase domain maps to Val12–Thr274. Mn(2+) is bound by residues Asp21, His209, His211, and Asn245. The tract at residues Arg398–Gly524 is regulatory domain.

The protein belongs to the alpha-IPM synthase/homocitrate synthase family. LeuA type 1 subfamily. As to quaternary structure, homodimer. It depends on Mn(2+) as a cofactor.

It localises to the cytoplasm. The catalysed reaction is 3-methyl-2-oxobutanoate + acetyl-CoA + H2O = (2S)-2-isopropylmalate + CoA + H(+). It participates in amino-acid biosynthesis; L-leucine biosynthesis; L-leucine from 3-methyl-2-oxobutanoate: step 1/4. Catalyzes the condensation of the acetyl group of acetyl-CoA with 3-methyl-2-oxobutanoate (2-ketoisovalerate) to form 3-carboxy-3-hydroxy-4-methylpentanoate (2-isopropylmalate). The sequence is that of 2-isopropylmalate synthase from Rhodopseudomonas palustris (strain BisB5).